We begin with the raw amino-acid sequence, 336 residues long: 25S rRNA (uridine(2634)-N(3))-methyltransferase (336 aa).

The disordered stretch occupies residues 286 to 307 (PGYHHRRTNSEQDTTKPAKERD). A compositionally biased stretch (basic and acidic residues) spans 293-307 (TNSEQDTTKPAKERD).

It belongs to the class I-like SAM-binding methyltransferase superfamily. BMT5 family.

The protein localises to the nucleus. It localises to the nucleolus. The catalysed reaction is uridine(2634) in 25S rRNA + S-adenosyl-L-methionine = N(3)-methyluridine(2634) in 25S rRNA + S-adenosyl-L-homocysteine + H(+). S-adenosyl-L-methionine-dependent methyltransferase that specifically methylates the N(3) position of uridine 2634 (m3U2634) in 25S rRNA. This chain is 25S rRNA (uridine(2634)-N(3))-methyltransferase (BMT5), found in Saccharomyces cerevisiae (strain ATCC 204508 / S288c) (Baker's yeast).